Reading from the N-terminus, the 121-residue chain is Ribosome-binding factor A (121 aa).

It belongs to the RbfA family. Monomer. Binds 30S ribosomal subunits, but not 50S ribosomal subunits or 70S ribosomes.

It localises to the cytoplasm. One of several proteins that assist in the late maturation steps of the functional core of the 30S ribosomal subunit. Associates with free 30S ribosomal subunits (but not with 30S subunits that are part of 70S ribosomes or polysomes). Required for efficient processing of 16S rRNA. May interact with the 5'-terminal helix region of 16S rRNA. The chain is Ribosome-binding factor A from Paraburkholderia xenovorans (strain LB400).